Reading from the N-terminus, the 138-residue chain is uncharacterized protein (138 aa).

At Ser110 the chain carries Phosphoserine.

It is found in the cytoplasm. It localises to the nucleus. This is an uncharacterized protein from Schizosaccharomyces pombe (strain 972 / ATCC 24843) (Fission yeast).